The sequence spans 313 residues: UPF0761 membrane protein VS_0126 (313 aa).

The next 6 helical transmembrane spans lie at 41–61 (YLAYITLLSIVPMLTVLLSIL), 104–124 (MTAVGSVFLFIAALMLISNID), 139–159 (AVLSFSMYWMVLTLGPILIGA), 185–205 (VIRKLPLITSFFAFFGLYLLV), 217–237 (AGSLVAALLFELSKKGFAAYI), and 249–269 (ALAAIPILFVWVYLCWLIVLV). Polar residues predominate over residues 281–290 (EQWSDSQEMV). The segment at 281–313 (EQWSDSQEMVHSSDKDKITEQGNNSDSTDPESK) is disordered.

It belongs to the UPF0761 family.

The protein resides in the cell inner membrane. The protein is UPF0761 membrane protein VS_0126 of Vibrio atlanticus (strain LGP32) (Vibrio splendidus (strain Mel32)).